The primary structure comprises 453 residues: Adenosylmethionine-8-amino-7-oxononanoate aminotransferase (453 aa).

Position 118–119 (118–119 (GS)) interacts with pyridoxal 5'-phosphate. Tyr151 provides a ligand contact to substrate. Asp258 contacts pyridoxal 5'-phosphate. Substrate contacts are provided by Lys287, Gly322, and Arg417. N6-(pyridoxal phosphate)lysine is present on Lys287.

This sequence belongs to the class-III pyridoxal-phosphate-dependent aminotransferase family. BioA subfamily. As to quaternary structure, homodimer. It depends on pyridoxal 5'-phosphate as a cofactor.

The protein localises to the cytoplasm. The catalysed reaction is (8S)-8-amino-7-oxononanoate + S-adenosyl-L-methionine = S-adenosyl-4-methylsulfanyl-2-oxobutanoate + (7R,8S)-7,8-diammoniononanoate. It functions in the pathway cofactor biosynthesis; biotin biosynthesis; 7,8-diaminononanoate from 8-amino-7-oxononanoate (SAM route): step 1/1. Catalyzes the transfer of the alpha-amino group from S-adenosyl-L-methionine (SAM) to 7-keto-8-aminopelargonic acid (KAPA) to form 7,8-diaminopelargonic acid (DAPA). It is the only aminotransferase known to utilize SAM as an amino donor. The sequence is that of Adenosylmethionine-8-amino-7-oxononanoate aminotransferase from Geobacter sulfurreducens (strain ATCC 51573 / DSM 12127 / PCA).